A 198-amino-acid polypeptide reads, in one-letter code: uncharacterized protein (198 aa).

A signal peptide spans 1 to 28; sequence MHPTQRKLMKRIILFLSLLFCIACPAIA.

The protein belongs to the fimbrial protein family.

The protein resides in the fimbrium. In terms of biological role, part of the yadCKLM-htrE-yadVN fimbrial operon. Could contribute to adhesion to various surfaces in specific environmental niches. This is an uncharacterized protein from Escherichia coli (strain K12).